The following is a 797-amino-acid chain: LPS-assembly protein LptD (797 aa).

The signal sequence occupies residues 1–20; that stretch reads MHTIRCLILSALSVAGAAQA. Residues 23–45 are disordered; sequence SQDAAPAGRQPVGSVASPGLEMP.

Belongs to the LptD family. Component of the lipopolysaccharide transport and assembly complex. Interacts with LptE and LptA.

The protein localises to the cell outer membrane. In terms of biological role, together with LptE, is involved in the assembly of lipopolysaccharide (LPS) at the surface of the outer membrane. In Bordetella avium (strain 197N), this protein is LPS-assembly protein LptD.